A 2185-amino-acid polypeptide reads, in one-letter code: Genome polyprotein (2185 aa).

Glycine 2 carries the N-myristoyl glycine; by host lipid modification. Residues 2-1495 are Cytoplasmic-facing; the sequence is GAQVSTQKTG…HVNRAFICLQ (1494 aa). Residues 566 to 582 are amphipathic alpha-helix; that stretch reads FFQGPPGEVMGRAIARV. Residues histidine 872 and aspartate 890 each act as for protease 2A activity in the active site. Zn(2+)-binding residues include cysteine 907 and cysteine 909. Cysteine 961 acts as the For protease 2A activity in catalysis. Positions 967 and 969 each coordinate Zn(2+). The segment at 1101–1173 is membrane-binding; the sequence is NSGWLKKFTE…EQSAPSQSDQ (73 aa). Residues 1101–1239 form an oligomerization region; it reads NSGWLKKFTE…SPGAGKSVAT (139 aa). An RNA-binding region spans residues 1122-1126; sequence AIKIQ. One can recognise an SF3 helicase domain in the interval 1205–1361; that stretch reads EKKMSNYIQF…SMYSQNGKIN (157 aa). Residues cysteine 1369, cysteine 1381, and cysteine 1386 each coordinate Zn(2+). The C4-type; degenerate zinc-finger motif lies at 1369–1386; that stretch reads CDEECCPVNFKKCCPLVC. Positions 1413 to 1420 are RNA-binding; the sequence is EYNHRHSV. An oligomerization region spans residues 1424 to 1429; that stretch reads LEALFQ. An intramembrane segment occupies 1496 to 1511; it reads ALTTFVSVAGIIYIIY. Topologically, residues 1512 to 2185 are cytoplasmic; the sequence is KLFAGFQGAY…TLRRKWLDSF (674 aa). Tyrosine 1521 bears the O-(5'-phospho-RNA)-tyrosine mark. Residues 1541 to 1719 form the Peptidase C3 domain; that stretch reads GPAFEFAVAM…FSAALLRHYF (179 aa). Catalysis depends on for protease 3C activity residues histidine 1580, glutamate 1611, and cysteine 1687. The region spanning 1950 to 2066 is the RdRp catalytic domain; that stretch reads GHLIAFDYSG…SYPWPIDASL (117 aa). Mg(2+) is bound by residues aspartate 1956 and aspartate 2052.

This sequence belongs to the picornaviruses polyprotein family. In terms of assembly, interacts with capsid protein VP1 and capsid protein VP3 to form heterotrimeric protomers. As to quaternary structure, interacts with capsid protein VP0, and capsid protein VP3 to form heterotrimeric protomers. Five protomers subsequently associate to form pentamers which serve as building blocks for the capsid. Interacts with capsid protein VP2, capsid protein VP3 and capsid protein VP4 following cleavage of capsid protein VP0. Interacts with host CXADR. Interacts with capsid protein VP1 and capsid protein VP3 in the mature capsid. In terms of assembly, interacts with capsid protein VP0 and capsid protein VP1 to form heterotrimeric protomers. Five protomers subsequently associate to form pentamers which serve as building blocks for the capsid. Interacts with capsid protein VP4 in the mature capsid. Interacts with protein 2C; this interaction may be important for virion morphogenesis. As to quaternary structure, interacts with capsid protein VP1 and capsid protein VP3. Homodimer. In terms of assembly, homohexamer; forms a hexameric ring structure with 6-fold symmetry characteristic of AAA+ ATPases. Interacts (via N-terminus) with host RTN3 (via reticulon domain); this interaction is important for viral replication. Interacts with capsid protein VP3; this interaction may be important for virion morphogenesis. As to quaternary structure, interacts with protein 3CD. Homodimer. Interacts with host GBF1. Interacts (via GOLD domain) with host ACBD3 (via GOLD domain); this interaction allows the formation of a viral protein 3A/ACBD3 heterotetramer with a 2:2 stoichiometry, which will stimulate the recruitment of host PI4KB in order to synthesize PI4P at the viral RNA replication sites. In terms of assembly, interacts with RNA-directed RNA polymerase. As to quaternary structure, interacts with protein 3AB and with RNA-directed RNA polymerase. Interacts with Viral protein genome-linked and with protein 3CD. It depends on Mg(2+) as a cofactor. In terms of processing, specific enzymatic cleavages in vivo by the viral proteases yield processing intermediates and the mature proteins. Post-translationally, myristoylation is required for the formation of pentamers during virus assembly. Further assembly of 12 pentamers and a molecule of genomic RNA generates the provirion. During virion maturation, immature virions are rendered infectious following cleavage of VP0 into VP4 and VP2. This maturation seems to be an autocatalytic event triggered by the presence of RNA in the capsid and it is followed by a conformational change infectious virion. In terms of processing, myristoylation is required during RNA encapsidation and formation of the mature virus particle. Post-translationally, VPg is uridylylated by the polymerase into VPg-pUpU. This acts as a nucleotide-peptide primer for the genomic RNA replication.

Its subcellular location is the virion. It is found in the host cytoplasm. It localises to the host cytoplasmic vesicle membrane. The protein resides in the host nucleus. The enzyme catalyses a ribonucleoside 5'-triphosphate + H2O = a ribonucleoside 5'-diphosphate + phosphate + H(+). It carries out the reaction Selective cleavage of Tyr-|-Gly bond in the picornavirus polyprotein.. It catalyses the reaction RNA(n) + a ribonucleoside 5'-triphosphate = RNA(n+1) + diphosphate. The catalysed reaction is Selective cleavage of Gln-|-Gly bond in the poliovirus polyprotein. In other picornavirus reactions Glu may be substituted for Gln, and Ser or Thr for Gly.. With respect to regulation, replication or transcription is subject to high level of random mutations by the nucleotide analog ribavirin. Forms an icosahedral capsid of pseudo T=3 symmetry with capsid proteins VP2 and VP3. The capsid is 300 Angstroms in diameter, composed of 60 copies of each capsid protein and enclosing the viral positive strand RNA genome. Capsid protein VP1 mainly forms the vertices of the capsid. Capsid protein VP1 interacts with host CXADR to provide virion attachment to target host cells. This attachment induces virion internalization. Tyrosine kinases are probably involved in the entry process. After binding to its receptor, the capsid undergoes conformational changes. Capsid protein VP1 N-terminus (that contains an amphipathic alpha-helix) and capsid protein VP4 are externalized. Together, they shape a pore in the host membrane through which viral genome is translocated to host cell cytoplasm. Functionally, forms an icosahedral capsid of pseudo T=3 symmetry with capsid proteins VP2 and VP3. The capsid is 300 Angstroms in diameter, composed of 60 copies of each capsid protein and enclosing the viral positive strand RNA genome. In terms of biological role, lies on the inner surface of the capsid shell. After binding to the host receptor, the capsid undergoes conformational changes. Capsid protein VP4 is released, Capsid protein VP1 N-terminus is externalized, and together, they shape a pore in the host membrane through which the viral genome is translocated into the host cell cytoplasm. Its function is as follows. Component of immature procapsids, which is cleaved into capsid proteins VP4 and VP2 after maturation. Allows the capsid to remain inactive before the maturation step. Cysteine protease that cleaves viral polyprotein and specific host proteins. It is responsible for the autocatalytic cleavage between the P1 and P2 regions, which is the first cleavage occurring in the polyprotein. Also cleaves the host translation initiation factor EIF4G1, in order to shut down the capped cellular mRNA translation. Inhibits the host nucleus-cytoplasm protein and RNA trafficking by cleaving host members of the nuclear pores. Counteracts stress granule formation probably by antagonizing its assembly or promoting its dissassembly. Functionally, plays an essential role in the virus replication cycle by acting as a viroporin. Creates a pore in the host endoplasmic reticulum and as a consequence releases Ca2+ in the cytoplasm of infected cell. In turn, high levels of cytoplasmic calcium may trigger membrane trafficking and transport of viral ER-associated proteins to viroplasms, sites of viral genome replication. In terms of biological role, induces and associates with structural rearrangements of intracellular membranes. Displays RNA-binding, nucleotide binding and NTPase activities. May play a role in virion morphogenesis and viral RNA encapsidation by interacting with the capsid protein VP3. Its function is as follows. Localizes the viral replication complex to the surface of membranous vesicles. Together with protein 3CD binds the Cis-Active RNA Element (CRE) which is involved in RNA synthesis initiation. Acts as a cofactor to stimulate the activity of 3D polymerase, maybe through a nucleid acid chaperone activity. Localizes the viral replication complex to the surface of membranous vesicles. It inhibits host cell endoplasmic reticulum-to-Golgi apparatus transport and causes the disassembly of the Golgi complex, possibly through GBF1 interaction. This would result in depletion of MHC, trail receptors and IFN receptors at the host cell surface. Plays an essential role in viral RNA replication by recruiting ACBD3 and PI4KB at the viral replication sites, thereby allowing the formation of the rearranged membranous structures where viral replication takes place. Functionally, acts as a primer for viral RNA replication and remains covalently bound to viral genomic RNA. VPg is uridylylated prior to priming replication into VPg-pUpU. The oriI viral genomic sequence may act as a template for this. The VPg-pUpU is then used as primer on the genomic RNA poly(A) by the RNA-dependent RNA polymerase to replicate the viral genome. During genome replication, the VPg-RNA linkage is removed by the host TDP2, thereby accelerating replication. During the late stage of the replication cycle, host TDP2 is excluded from sites of viral RNA synthesis and encapsidation, allowing for the generation of progeny virions. In terms of biological role, involved in the viral replication complex and viral polypeptide maturation. It exhibits protease activity with a specificity and catalytic efficiency that is different from protease 3C. Protein 3CD lacks polymerase activity. Protein 3CD binds to the 5'UTR of the viral genome. Its function is as follows. Replicates the viral genomic RNA on the surface of intracellular membranes. May form linear arrays of subunits that propagate along a strong head-to-tail interaction called interface-I. Covalently attaches UMP to a tyrosine of VPg, which is used to prime RNA synthesis. The positive stranded RNA genome is first replicated at virus induced membranous vesicles, creating a dsRNA genomic replication form. This dsRNA is then used as template to synthesize positive stranded RNA genomes. ss(+)RNA genomes are either translated, replicated or encapsidated. Major viral protease that mediates proteolytic processing of the polyprotein. Cleaves host EIF5B, contributing to host translation shutoff. Also cleaves host PABPC1, contributing to host translation shutoff. Cleaves host NLRP1, triggers host N-glycine-mediated degradation of the autoinhibitory NLRP1 N-terminal fragment. This is Genome polyprotein from Sus scrofa (Pig).